The following is a 103-amino-acid chain: Cell division protein FtsB (103 aa).

The Cytoplasmic portion of the chain corresponds to Met-1–Lys-3. A helical transmembrane segment spans residues Leu-4 to Phe-21. Over Gly-22–Arg-103 the chain is Periplasmic. Residues Asp-28–Ala-71 are a coiled coil.

It belongs to the FtsB family. In terms of assembly, part of a complex composed of FtsB, FtsL and FtsQ.

It is found in the cell inner membrane. Its function is as follows. Essential cell division protein. May link together the upstream cell division proteins, which are predominantly cytoplasmic, with the downstream cell division proteins, which are predominantly periplasmic. The protein is Cell division protein FtsB of Shigella flexneri serotype 5b (strain 8401).